The sequence spans 239 residues: Purine nucleoside phosphorylase DeoD-type (239 aa).

An a purine D-ribonucleoside-binding site is contributed by histidine 5. Residues glycine 21, arginine 25, arginine 44, and 88–91 (RVGS) each bind phosphate. A purine D-ribonucleoside-binding positions include 180–182 (EME) and 204–205 (SD). The active-site Proton donor is the aspartate 205.

Belongs to the PNP/UDP phosphorylase family. As to quaternary structure, homohexamer; trimer of homodimers.

The catalysed reaction is a purine D-ribonucleoside + phosphate = a purine nucleobase + alpha-D-ribose 1-phosphate. It carries out the reaction a purine 2'-deoxy-D-ribonucleoside + phosphate = a purine nucleobase + 2-deoxy-alpha-D-ribose 1-phosphate. Catalyzes the reversible phosphorolytic breakdown of the N-glycosidic bond in the beta-(deoxy)ribonucleoside molecules, with the formation of the corresponding free purine bases and pentose-1-phosphate. The chain is Purine nucleoside phosphorylase DeoD-type from Cronobacter sakazakii (strain ATCC BAA-894) (Enterobacter sakazakii).